The chain runs to 173 residues: Crossover junction endodeoxyribonuclease RuvC (173 aa).

Residues Asp8, Glu67, and Asp139 contribute to the active site. Residues Asp8, Glu67, and Asp139 each coordinate Mg(2+).

Belongs to the RuvC family. In terms of assembly, homodimer which binds Holliday junction (HJ) DNA. The HJ becomes 2-fold symmetrical on binding to RuvC with unstacked arms; it has a different conformation from HJ DNA in complex with RuvA. In the full resolvosome a probable DNA-RuvA(4)-RuvB(12)-RuvC(2) complex forms which resolves the HJ. It depends on Mg(2+) as a cofactor.

It is found in the cytoplasm. The catalysed reaction is Endonucleolytic cleavage at a junction such as a reciprocal single-stranded crossover between two homologous DNA duplexes (Holliday junction).. The RuvA-RuvB-RuvC complex processes Holliday junction (HJ) DNA during genetic recombination and DNA repair. Endonuclease that resolves HJ intermediates. Cleaves cruciform DNA by making single-stranded nicks across the HJ at symmetrical positions within the homologous arms, yielding a 5'-phosphate and a 3'-hydroxyl group; requires a central core of homology in the junction. The consensus cleavage sequence is 5'-(A/T)TT(C/G)-3'. Cleavage occurs on the 3'-side of the TT dinucleotide at the point of strand exchange. HJ branch migration catalyzed by RuvA-RuvB allows RuvC to scan DNA until it finds its consensus sequence, where it cleaves and resolves the cruciform DNA. In Enterobacter sp. (strain 638), this protein is Crossover junction endodeoxyribonuclease RuvC.